Here is a 709-residue protein sequence, read N- to C-terminus: Protein transport protein SEC39 (709 aa).

It belongs to the SEC39 family. In terms of assembly, component of a peripheral membrane protein complex consisting of DSL1, SEC39/DSL3 and TIP20. Bound to a SNARE complex consisting of UFE1, USE1, SEC20 and SEC22 or YKT6 through direct interaction of TIP20 with SEC20. Interacts with TIP20 and DSL1.

It is found in the endoplasmic reticulum membrane. In terms of biological role, required for protein transport between the Golgi and the endoplasmic reticulum. May contribute to tethering of coatomer-coated retrograde transport vesicles to the ER membrane through interaction with and stabilization of the SNARE complex. The sequence is that of Protein transport protein SEC39 from Saccharomyces cerevisiae (strain ATCC 204508 / S288c) (Baker's yeast).